A 254-amino-acid polypeptide reads, in one-letter code: MAVITMKSLLEAGVHFGHQVKRLDPRMKRFIFSERNEIHILDLQKTLQGIKDSYELVQSVIKNGKKVLFVGTKKQASEIIEQEAKRSEMPYVNNRWLGGMLSNFNTIKKSVQKLKKLEKMEVDGTFEMISKKEVSQINREKLKLAKNLTGIKDMEELPGAIFIIDPKREQIVINEARKLGIPIIAVVDTNCNPDVIDCPIPGNDDAIRSVALFTKIISDAILESDKEVGIQIVENLNEEDLMSEIEVKNERKES.

It belongs to the universal ribosomal protein uS2 family.

The protein is Small ribosomal subunit protein uS2 of Borrelia duttonii (strain Ly).